The following is a 216-amino-acid chain: Large ribosomal subunit protein uL3 (216 aa).

Glutamine 153 bears the N5-methylglutamine mark.

The protein belongs to the universal ribosomal protein uL3 family. As to quaternary structure, part of the 50S ribosomal subunit. Forms a cluster with proteins L14 and L19. In terms of processing, methylated by PrmB.

In terms of biological role, one of the primary rRNA binding proteins, it binds directly near the 3'-end of the 23S rRNA, where it nucleates assembly of the 50S subunit. The chain is Large ribosomal subunit protein uL3 from Burkholderia ambifaria (strain MC40-6).